Reading from the N-terminus, the 403-residue chain is Tripartite motif-containing protein 59 (403 aa).

The RING-type zinc finger occupies 10–60; the sequence is CPICYSIFEDPRVLPCSHTFCRNCLENILQASGNFYIWRPLRIPLKCPNCR. The B box-type zinc-finger motif lies at 92–134; the sequence is PDIVTCPEHYRQPLNVYCLLDKKLVCGHCLTIGQHHGHPIDDL. Residues Cys97, His100, Cys120, and His126 each coordinate Zn(2+). Residues 163-246 are a coiled coil; that stretch reads LIEKLKEQKS…ALTISLQEES (84 aa). Residues 329–349 traverse the membrane as a helical segment; the sequence is ILNIVVVTLISVILMSILFFN.

The protein belongs to the TRIM/RBCC family. Interacts with ECSIT.

Its subcellular location is the endoplasmic reticulum membrane. The catalysed reaction is S-ubiquitinyl-[E2 ubiquitin-conjugating enzyme]-L-cysteine + [acceptor protein]-L-lysine = [E2 ubiquitin-conjugating enzyme]-L-cysteine + N(6)-ubiquitinyl-[acceptor protein]-L-lysine.. Its pathway is protein modification; protein ubiquitination. In terms of biological role, E3 ubiquitin ligase involved in different processes such as development and immune response. Serves as a negative regulator for innate immune signaling pathways by suppressing RLR-induced activation of IRF3/7 and NF-kappa-B via interaction with adapter ECSIT. Regulates autophagy through modulating both the transcription and the ubiquitination of BECN1. On the one hand, regulates the transcription of BECN1 through negatively modulating the NF-kappa-B pathway. On the other hand, regulates TRAF6-mediated 'Lys-63'-linked ubiquitination of BECN1, thus affecting the formation of the BECN1-PIK3C3 complex. In addition, mediates 'Lys-48'-linked ubiquitination of TRAF6 and thereby promotes TRAF6 proteasomal degradation. Also acts as a critical regulator for early embryo development from blastocyst stage to gastrula through modulating F-actin assembly and WASH1 'Lys-63'-linked ubiquitination. This chain is Tripartite motif-containing protein 59 (TRIM59), found in Homo sapiens (Human).